The sequence spans 639 residues: Alpha-dioxygenase 1 (639 aa).

Histidine 163 serves as the catalytic Proton acceptor. Residue aspartate 164 coordinates Ca(2+). Histidine 168 provides a ligand contact to heme b. Threonine 216, tryptophan 218, aspartate 220, and serine 222 together coordinate Ca(2+). The heme b site is built by histidine 389, arginine 486, and arginine 490.

The protein belongs to the peroxidase family. In terms of assembly, forms monomers in solution. Requires heme b as cofactor. It depends on Ca(2+) as a cofactor. Expressed in roots (epiderm), mature flowers (e.g. anthers) and senescing leaves.

It localises to the lipid droplet. The catalysed reaction is a 1,2-saturated fatty acid + O2 = a (2R)-2-hydroperoxy fatty acid. It catalyses the reaction (9Z,12Z,15Z)-octadecatrienoate + O2 = (R)-2-hydroperoxy-(9Z,12Z,15Z)-octadecatrienoate. The enzyme catalyses hexadecanoate + O2 = (2R)-2-hydroperoxyhexadecanoate. It carries out the reaction (9Z,12Z)-octadecadienoate + O2 = (2R,9Z,12Z)-2-hydroperoxyoctadecadienoate. The catalysed reaction is (9Z)-octadecenoate + O2 = (2R,9Z)-2-hydroperoxyoctadecenoate. Functionally, alpha-dioxygenase that catalyzes the primary oxygenation step of a variety of 14-20 carbon fatty acids, containing up to three unsaturated bonds, into their corresponding 2R-hydroperoxides. Involved in the production of oxylipins that function in cell signaling, wound healing, and protection from infection. Mediates protection against oxidative stress and cell death, probably by generating some lipid-derived molecules. Promotes local and systemic plant defense in a salicylic acid (SA)-dependent manner, including the establishment of systemic acquired resistance (SAR) in response to incompatible interaction. Involved in a negative regulation of abscisic acid (ABA)-mediated signaling pathway. This chain is Alpha-dioxygenase 1, found in Arabidopsis thaliana (Mouse-ear cress).